A 580-amino-acid chain; its full sequence is Potassium-transporting ATPase potassium-binding subunit (580 aa).

Transmembrane regions (helical) follow at residues 3–23 (ASGA…SVPL), 65–85 (DYAF…YALQ), 136–156 (GLGV…VALI), 179–199 (LYIL…QGVV), 263–283 (LSNF…CHTF), 293–313 (GWAV…ACVA), 399–419 (GLYG…LMVG), 436–456 (MASL…AIAV), 504–524 (AIGV…LALA), and 546–566 (LFVG…FVPA).

It belongs to the KdpA family. The system is composed of three essential subunits: KdpA, KdpB and KdpC.

It is found in the cell inner membrane. Its function is as follows. Part of the high-affinity ATP-driven potassium transport (or Kdp) system, which catalyzes the hydrolysis of ATP coupled with the electrogenic transport of potassium into the cytoplasm. This subunit binds the periplasmic potassium ions and delivers the ions to the membrane domain of KdpB through an intramembrane tunnel. The chain is Potassium-transporting ATPase potassium-binding subunit from Sorangium cellulosum (strain So ce56) (Polyangium cellulosum (strain So ce56)).